The following is a 346-amino-acid chain: GPALPP motifs-containing protein 1 (346 aa).

Disordered regions lie at residues Met1–Met283 and Lys289–Asp308. An N-acetylalanine modification is found at Ala2. The GPALPP motif 1 signature appears at Gly7–Pro12. Ser28 is subject to Phosphoserine. Positions Gly32–Pro37 match the GPALPP motif 2 motif. Over residues Gly60–Thr69 the composition is skewed to acidic residues. The GPALPP motif 3 signature appears at Gly91–Pro96. Ser104 is subject to Phosphoserine. A compositionally biased stretch (pro residues) spans Pro106–Pro115. The GPALPP motif 4 motif lies at Gly111 to Pro116. The span at Gln123–Pro132 shows a compositional bias: basic and acidic residues. Residues Ser136, Ser141, and Ser146 each carry the phosphoserine modification. Residues Glu142–Ile152 show a composition bias toward acidic residues. 2 stretches are compositionally biased toward basic and acidic residues: residues Glu169–Thr193 and Pro233–Ala267. Residue Lys277 forms a Glycyl lysine isopeptide (Lys-Gly) (interchain with G-Cter in SUMO2) linkage. Over residues Lys293–Asp308 the composition is skewed to basic and acidic residues. Lys314 participates in a covalent cross-link: Glycyl lysine isopeptide (Lys-Gly) (interchain with G-Cter in SUMO2).

The protein is GPALPP motifs-containing protein 1 (Gpalpp1) of Mus musculus (Mouse).